Reading from the N-terminus, the 285-residue chain is MEAPPPAPRSRLCGAWGPFPRVFAAGAVAADSQSFVEDPELRSYVSDPGSSESGWDRLRQLFVKDEQRKISKEMDYICRAALSAGIIGWAYGGIPAFIYAKRRYIEQSQAEIYHNRFDAVQSAHRAATRGFIRYGWRWSWRTAVFVTIFNTVNTGLTVYRNKDALSHFAIAGAVTGGLFRINLGLRGLVAGGIIGALLGTPMGSLLMALEKHCGETVQERRQKDREAQQEQRLEEWRRNLQVTELLPMEIESGLEKIQPEKDAQRIEELLRLPRNPASPDKQSED.

4 consecutive transmembrane segments (helical) span residues 80–100 (AALSAGIIGWAYGGIPAFIYA), 137–159 (RWSWRTAVFVTIFNTVNTGLTVY), 165–185 (LSHFAIAGAVTGGLFRINLGL), and 188–208 (LVAGGIIGALLGTPMGSLLMA).

The protein belongs to the Tim17/Tim22/Tim23 family. As to quaternary structure, associates with the intermediate 315 kDa subcomplex of incompletely assembled complex I. Interacts with TMEM70.

It localises to the mitochondrion membrane. Chaperone protein involved in the assembly of the mitochondrial NADH:ubiquinone oxidoreductase complex (complex I). Participates in constructing the membrane arm of complex I. This is Complex I assembly factor TIMMDC1, mitochondrial from Rattus norvegicus (Rat).